The sequence spans 544 residues: Chaperonin GroEL (544 aa).

ATP-binding positions include 30 to 33, Lys51, 87 to 91, Gly415, and Asp495; these read TLGP and DGTTT.

This sequence belongs to the chaperonin (HSP60) family. As to quaternary structure, forms a cylinder of 14 subunits composed of two heptameric rings stacked back-to-back. Interacts with the co-chaperonin GroES.

Its subcellular location is the cytoplasm. The enzyme catalyses ATP + H2O + a folded polypeptide = ADP + phosphate + an unfolded polypeptide.. In terms of biological role, together with its co-chaperonin GroES, plays an essential role in assisting protein folding. The GroEL-GroES system forms a nano-cage that allows encapsulation of the non-native substrate proteins and provides a physical environment optimized to promote and accelerate protein folding. The polypeptide is Chaperonin GroEL (Aeromonas salmonicida).